The sequence spans 673 residues: Exoribonuclease 2 (673 aa).

The 326-residue stretch at 191–516 folds into the RNB domain; sequence RTDLTATPFF…NHRLLKAVIA (326 aa). The S1 motif domain occupies 562–645; sequence DKVFNAEIID…ETRSLIAKPA (84 aa). Residues 650 to 673 are disordered; sequence PGPAPVAPTSEADATPADEAPKAE.

The protein belongs to the RNR ribonuclease family. RNase II subfamily.

The protein resides in the cytoplasm. It carries out the reaction Exonucleolytic cleavage in the 3'- to 5'-direction to yield nucleoside 5'-phosphates.. Its function is as follows. Involved in mRNA degradation. Hydrolyzes single-stranded polyribonucleotides processively in the 3' to 5' direction. In Aeromonas hydrophila subsp. hydrophila (strain ATCC 7966 / DSM 30187 / BCRC 13018 / CCUG 14551 / JCM 1027 / KCTC 2358 / NCIMB 9240 / NCTC 8049), this protein is Exoribonuclease 2.